A 406-amino-acid polypeptide reads, in one-letter code: Probable tRNA sulfurtransferase (406 aa).

The region spanning 60 to 162 is the THUMP domain; that stretch reads PEAKARLQDT…PGAALLEVER (103 aa). ATP-binding positions include 180–181, 205–206, Arg262, Gly284, and Gln293; these read LL and HF.

This sequence belongs to the ThiI family.

It localises to the cytoplasm. The catalysed reaction is [ThiI sulfur-carrier protein]-S-sulfanyl-L-cysteine + a uridine in tRNA + 2 reduced [2Fe-2S]-[ferredoxin] + ATP + H(+) = [ThiI sulfur-carrier protein]-L-cysteine + a 4-thiouridine in tRNA + 2 oxidized [2Fe-2S]-[ferredoxin] + AMP + diphosphate. It catalyses the reaction [ThiS sulfur-carrier protein]-C-terminal Gly-Gly-AMP + S-sulfanyl-L-cysteinyl-[cysteine desulfurase] + AH2 = [ThiS sulfur-carrier protein]-C-terminal-Gly-aminoethanethioate + L-cysteinyl-[cysteine desulfurase] + A + AMP + 2 H(+). The protein operates within cofactor biosynthesis; thiamine diphosphate biosynthesis. Its function is as follows. Catalyzes the ATP-dependent transfer of a sulfur to tRNA to produce 4-thiouridine in position 8 of tRNAs, which functions as a near-UV photosensor. Also catalyzes the transfer of sulfur to the sulfur carrier protein ThiS, forming ThiS-thiocarboxylate. This is a step in the synthesis of thiazole, in the thiamine biosynthesis pathway. The sulfur is donated as persulfide by IscS. In Thermus thermophilus (strain ATCC 27634 / DSM 579 / HB8), this protein is Probable tRNA sulfurtransferase.